A 323-amino-acid polypeptide reads, in one-letter code: Zinc finger C2HC domain-containing protein 1A (323 aa).

The segment at 7–36 (ELRPCKICGRTFFPATLKKHVPICQKTSVK) adopts a C2HC/C3H-type 1 zinc-finger fold. 4 residues coordinate Zn(2+): C11, C14, H26, and C30. The interval 35-75 (VKKRKTFESSRQRAEGTDINTVKPVKPRPEPPKKQSNWKRK) is disordered. Positions 40–50 (TFESSRQRAEG) are enriched in basic and acidic residues. The C2HC/C3H-type 2 zinc finger occupies 110–139 (DYVQCPYCQRRFNQNAADRHINFCKEQSAR). Residues C114, C117, H129, and C133 each coordinate Zn(2+). Residues 138–273 (ARMGQKIKGG…EAAMGYDSSD (136 aa)) form a disordered region. The span at 208-226 (KYQTQSPAHKNSTMVTSPQ) shows a compositional bias: polar residues.

The protein belongs to the ZC2HC1 family. Zn(2+) serves as cofactor.

This is Zinc finger C2HC domain-containing protein 1A (zc2hc1a) from Xenopus laevis (African clawed frog).